Here is a 1930-residue protein sequence, read N- to C-terminus: Transport and Golgi organization protein 1 homolog (1930 aa).

The first 24 residues, 1-24, serve as a signal peptide directing secretion; it reads MAAAPGLLFWLFVLGALWWVPGQS. The Lumenal segment spans residues 25 to 1171; that stretch reads DLSHGRRFSD…EPAAVPPLES (1147 aa). The SH3 domain maps to 45–107; that stretch reads MLMYRGKALE…PKDLIKVLHK (63 aa). 5 disordered regions span residues 144-263, 317-496, 547-737, 754-891, and 1018-1149; these read LELE…REKT, EEEE…AAEK, LGSS…MNSQ, TKQP…TPEI, and TAPL…PVGA. Over residues 152-189 the composition is skewed to basic and acidic residues; sequence EESKKAEEVSQHREKSPEESRGRELDPVPEPEAFRADS. Over residues 197–211 the composition is skewed to polar residues; that stretch reads SESTEGLQGQPSAQE. Serine 229 carries the phosphoserine modification. Polar residues predominate over residues 247 to 256; the sequence is ESRTGNSSPA. Over residues 317–330 the composition is skewed to acidic residues; it reads EEEEEVEEDADSSD. Basic and acidic residues predominate over residues 338–368; sequence SDKDEKVPGKPMIEKYLTDKDPNLSEEDKVE. An N-linked (GlcNAc...) asparagine glycan is attached at asparagine 360. Residues 420–430 show a composition bias toward acidic residues; sequence DSEDEGDDLFV. Basic and acidic residues-rich tracts occupy residues 431–442 and 451–461; these read EEPKTNDVKDSE and GEEKDIQESRK. Asparagine 631 carries an N-linked (GlcNAc...) asparagine glycan. The span at 661–677 shows a compositional bias: basic and acidic residues; it reads EDGTDAEQARAIRRPQE. Positions 692-701 are enriched in acidic residues; it reads DEEEEEEEGD. A compositionally biased stretch (polar residues) spans 715–726; it reads VSAQQSRENSPS. Residues 791–800 are compositionally biased toward basic and acidic residues; the sequence is EESHLADMRA. Serine 856 carries the phosphoserine modification. Basic and acidic residues predominate over residues 1030 to 1039; it reads GWARPGEERQ. 2 stretches are compositionally biased toward polar residues: residues 1040 to 1054 and 1115 to 1127; these read PPQQ…TGDL and QPVT…SEVS. Positions 1128 to 1137 are enriched in basic and acidic residues; the sequence is QKPDTKKDID. Residues 1172–1192 lie within the membrane without spanning it; it reads AFGSLYAFILYLSKMLLATLP. The Lumenal portion of the chain corresponds to 1193 to 1202; sequence DNVQPGPDFY. The helical transmembrane segment at 1203-1223 threads the bilayer; it reads GLPWQPVIITAVLGIVSFAIF. The Cytoplasmic segment spans residues 1224 to 1930; sequence SWRTILVVKS…DRSQASKPTP (707 aa). 2 coiled-coil regions span residues 1236 to 1329 and 1359 to 1422; these read YQVT…KNQD and LNEA…EIAL. The tract at residues 1238–1677 is mediates interaction with MIA2; the sequence is VTEKQISEKL…VIVKPMPGRP (440 aa). The segment at 1447–1472 is disordered; it reads ESEDPDKGGNESDDLANGETGGDRSE. Serine 1458 is modified (phosphoserine). Residues 1514 to 1662 adopt a coiled-coil conformation; it reads NLEDQIKKLE…LLEMTQKMAM (149 aa). Disordered stretches follow at residues 1669-1796, 1801-1820, and 1840-1930; these read IVKP…VPLM, PPPI…FGPR, and APGV…KPTP. Polar residues predominate over residues 1677 to 1694; that stretch reads PNTQNPPRRGLLSQNGSF. 2 positions are modified to phosphoserine: serine 1693 and serine 1705. A compositionally biased stretch (pro residues) spans 1706–1715; that stretch reads PPLPAEPPGR. Residues 1722–1738 show a composition bias toward basic and acidic residues; it reads SRRDTPRSEFGSLDRHL. Phosphoserine is present on residues serine 1733, serine 1754, serine 1766, and serine 1770. Residues 1760–1773 are compositionally biased toward low complexity; sequence PVVNSSSRSSSPAK. Positions 1776–1930 are proline-rich domain (PRD); mediates interaction with the COPII coat subunits SEC23A and SEC23B; it reads DEGKVNMAPK…DRSQASKPTP (155 aa). Residues 1801 to 1811 show a composition bias toward pro residues; that stretch reads PPPIRYGPPPQ. Position 1805 is an asymmetric dimethylarginine (arginine 1805). The segment at 1809–1869 is SEC16A-interacting region (SIR); required for its localization to endoplasmic reticulum exit sites and for its interaction with SEC16A; the sequence is PPQLCGGPFG…GHTPFRPPGS (61 aa). Basic and acidic residues predominate over residues 1846 to 1858; it reads GKRDLPLDPREFL. Residues 1881 to 1898 are compositionally biased toward pro residues; that stretch reads RLPPPTHGPQEYPPPPPA. A Phosphoserine modification is found at serine 1915. The span at 1915 to 1930 shows a compositional bias: polar residues; the sequence is SPSSVQDRSQASKPTP.

This sequence belongs to the MIA/OTOR family. Tango1 subfamily. As to quaternary structure, interacts with MIA2. Interacts (via SH3 domain) with COL7A1. Interacts with the COPII coat subunits SEC23A, SEC23B and maybe SEC24C. May interact with APOB and MIA2. Interacts with SEC16A.

Its subcellular location is the endoplasmic reticulum membrane. Functionally, plays a role in the transport of cargos that are too large to fit into COPII-coated vesicles and require specific mechanisms to be incorporated into membrane-bound carriers and exported from the endoplasmic reticulum. This protein is required for collagen VII (COL7A1) secretion by loading COL7A1 into transport carriers. It may participate in cargo loading of COL7A1 at endoplasmic reticulum exit sites by binding to COPII coat subunits Sec23/24 and guiding SH3-bound COL7A1 into a growing carrier. Does not play a role in global protein secretion and is apparently specific to COL7A1 cargo loading. However, it may participate in secretion of other proteins in cells that do not secrete COL7A1. It is also specifically required for the secretion of lipoproteins by participating in their export from the endoplasmic reticulum. Required for correct assembly of COPII coat components at endoplasmic reticulum exit sites (ERES) and for the localization of SEC16A and membrane-bound ER-resident complexes consisting of MIA2 and PREB/SEC12 to ERES. The chain is Transport and Golgi organization protein 1 homolog from Mus musculus (Mouse).